Here is an 814-residue protein sequence, read N- to C-terminus: Acyl-coenzyme A dehydrogenase (814 aa).

Glu497 acts as the Proton acceptor in catalysis.

This sequence belongs to the acyl-CoA dehydrogenase family. FAD serves as cofactor.

It carries out the reaction a medium-chain 2,3-saturated fatty acyl-CoA + oxidized [electron-transfer flavoprotein] + H(+) = a medium-chain (2E)-enoyl-CoA + reduced [electron-transfer flavoprotein]. The catalysed reaction is a long-chain 2,3-saturated fatty acyl-CoA + oxidized [electron-transfer flavoprotein] + H(+) = a long-chain (2E)-enoyl-CoA + reduced [electron-transfer flavoprotein]. It functions in the pathway lipid metabolism; fatty acid beta-oxidation. Catalyzes the dehydrogenation of acyl-coenzymes A (acyl-CoAs) to 2-enoyl-CoAs, the first step of the beta-oxidation cycle of fatty acid degradation. Is required for the utilization of medium- and long-chain fatty acids as sole carbon sources for growth. Is needed for bacterial survival during carbone-source starvation. The chain is Acyl-coenzyme A dehydrogenase (fadE) from Salmonella typhi.